We begin with the raw amino-acid sequence, 231 residues long: Small ribosomal subunit protein uS3 (231 aa).

The KH type-2 domain occupies 39–107 (IRELLHKELK…DVVLNIVEIR (69 aa)).

This sequence belongs to the universal ribosomal protein uS3 family. Part of the 30S ribosomal subunit. Forms a tight complex with proteins S10 and S14.

Binds the lower part of the 30S subunit head. Binds mRNA in the 70S ribosome, positioning it for translation. This chain is Small ribosomal subunit protein uS3, found in Nitrobacter winogradskyi (strain ATCC 25391 / DSM 10237 / CIP 104748 / NCIMB 11846 / Nb-255).